A 127-amino-acid polypeptide reads, in one-letter code: Probable tautomerase YusQ (127 aa).

Catalysis depends on Pro2, which acts as the Proton acceptor; via imino nitrogen.

Belongs to the 4-oxalocrotonate tautomerase family.

This Bacillus subtilis (strain 168) protein is Probable tautomerase YusQ (yusQ).